A 310-amino-acid polypeptide reads, in one-letter code: Aspartate carbamoyltransferase catalytic subunit (310 aa).

Carbamoyl phosphate is bound by residues arginine 55 and threonine 56. Lysine 85 is an L-aspartate binding site. Arginine 106, histidine 135, and glutamine 138 together coordinate carbamoyl phosphate. Positions 168 and 230 each coordinate L-aspartate. Leucine 268 and proline 269 together coordinate carbamoyl phosphate.

It belongs to the aspartate/ornithine carbamoyltransferase superfamily. ATCase family. As to quaternary structure, heterododecamer (2C3:3R2) of six catalytic PyrB chains organized as two trimers (C3), and six regulatory PyrI chains organized as three dimers (R2).

It carries out the reaction carbamoyl phosphate + L-aspartate = N-carbamoyl-L-aspartate + phosphate + H(+). The protein operates within pyrimidine metabolism; UMP biosynthesis via de novo pathway; (S)-dihydroorotate from bicarbonate: step 2/3. Its function is as follows. Catalyzes the condensation of carbamoyl phosphate and aspartate to form carbamoyl aspartate and inorganic phosphate, the committed step in the de novo pyrimidine nucleotide biosynthesis pathway. The polypeptide is Aspartate carbamoyltransferase catalytic subunit (Buchnera aphidicola subsp. Acyrthosiphon pisum (strain 5A)).